Consider the following 84-residue polypeptide: MTDKIRTLQGRVTSDKMEKSIVVAIERFVKHPIYGKFIKRTTKLHVHDENNECGIGDVVIIRECRPLSKTKSWTLVRVVEKAIL.

This sequence belongs to the universal ribosomal protein uS17 family. As to quaternary structure, part of the 30S ribosomal subunit.

One of the primary rRNA binding proteins, it binds specifically to the 5'-end of 16S ribosomal RNA. The polypeptide is Small ribosomal subunit protein uS17 (Erwinia tasmaniensis (strain DSM 17950 / CFBP 7177 / CIP 109463 / NCPPB 4357 / Et1/99)).